We begin with the raw amino-acid sequence, 341 residues long: Heme A synthase (341 aa).

A run of 5 helical transmembrane segments spans residues 11-31, 101-121, 127-147, 160-180, and 194-214; these read AVSTWLLVVAALVCAMIIIGG, LIGLVYFVPFVFFWMRGHLSA, LFGLFLLGGAQGAIGWWMVAS, LATHLGMAFVILGLSIWFSLE, and AGVTAGLLGLVFVQIILGAFV. A heme-binding site is contributed by H259. Transmembrane regions (helical) follow at residues 261–278, 288–308, and 315–335; these read WTGYLVALGVFAYAWQVW, FMVILPALVIGQIALGIAALL, and LSLAHQAGAILLFIAMVAAAW. Residue H319 participates in heme binding.

It belongs to the COX15/CtaA family. Type 2 subfamily. Interacts with CtaB. Requires heme b as cofactor.

Its subcellular location is the cell membrane. The enzyme catalyses Fe(II)-heme o + 2 A + H2O = Fe(II)-heme a + 2 AH2. It functions in the pathway porphyrin-containing compound metabolism; heme A biosynthesis; heme A from heme O: step 1/1. Its function is as follows. Catalyzes the conversion of heme O to heme A by two successive hydroxylations of the methyl group at C8. The first hydroxylation forms heme I, the second hydroxylation results in an unstable dihydroxymethyl group, which spontaneously dehydrates, resulting in the formyl group of heme A. This chain is Heme A synthase, found in Maricaulis maris (strain MCS10) (Caulobacter maris).